Here is a 564-residue protein sequence, read N- to C-terminus: Putative ABC transporter ATP-binding protein PBPRA2240 (564 aa).

ABC transporter domains follow at residues 3–244 (IEFS…GIRE) and 299–533 (LTVN…ANLT). ATP contacts are provided by residues 37-44 (GPSGSGKS) and 332-339 (GKNGSGKS).

This sequence belongs to the ABC transporter superfamily.

It localises to the cell inner membrane. Probably part of an ABC transporter complex. Responsible for energy coupling to the transport system. The polypeptide is Putative ABC transporter ATP-binding protein PBPRA2240 (Photobacterium profundum (strain SS9)).